A 1182-amino-acid polypeptide reads, in one-letter code: Tyrosine-protein kinase ABL2 (1182 aa).

2 disordered regions span residues 1–47 (MGQQ…TGFN) and 60–80 (EDGF…HRPY). Gly2 carries the N-myristoyl glycine lipid modification. A CAP region spans residues 2-106 (GQQVGRVGEA…SKENLLGATE (105 aa)). Residues 20–30 (RGIRGSSAARP) are compositionally biased toward low complexity. Phosphoserine is present on Ser97. In terms of domain architecture, SH3 spans 107-167 (SDPNLFVALY…PSNYITPVNS (61 aa)). Phosphotyrosine occurs at positions 116, 161, 174, 185, 218, and 231. The SH2 domain maps to 173–263 (WYHGPVSRSA…GLVTTLHYPA (91 aa)). Phosphotyrosine; by ABL1 and autocatalysis is present on Tyr261. Residue Tyr272 is modified to Phosphotyrosine; by autocatalysis. Ser275 is subject to Phosphoserine. In terms of domain architecture, Protein kinase spans 288–539 (ITMKHKLGGG…PSFAETHQAF (252 aa)). 294-302 (LGGGQYGEV) provides a ligand contact to ATP. Residues Tyr299 and Tyr303 each carry the phosphotyrosine modification. ATP contacts are provided by residues Lys317 and 362 to 368 (EYMPYGN). Asp409 serves as the catalytic Proton acceptor. The Kinase activation loop motif lies at 427 to 451 (DFGLSRLMTGDTYTAHAGAKFPIKW). Tyr439 is modified (phosphotyrosine; by autocatalysis and SRC-type Tyr-kinases). Tyr459 carries the phosphotyrosine modification. Residue Tyr568 is modified to Phosphotyrosine; by autocatalysis. The interval 611 to 641 (IRGAQASSGSPALPRKQRDKSPSSLLEDAKE) is disordered. A phosphoserine mark is found at Ser620, Ser631, and Ser633. Residue Asp647 is modified to Phosphotyrosine. The tract at residues 654–674 (SSFMKKRNAPTPPKRSSSFRE) is disordered. At Ser655 the chain carries Phosphoserine. Positions 658–660 (KKR) match the Nuclear localization signal motif. Ala662 and Arg668 each carry phosphotyrosine. Phosphoserine occurs at positions 669, 670, and 671. Phosphotyrosine is present on residues Tyr683 and Tyr718. Tyr683 carries the phosphotyrosine; by autocatalysis modification. An F-actin-binding region spans residues 694–930 (SLQHADGFSF…PVLPTTHNHK (237 aa)). Residues 763–794 (LRAGKPTASDDTSKPFPRSNSTSSMSSGLPEQ) form a disordered region. An N6-acetyllysine modification is found at Lys776. The span at 780-791 (RSNSTSSMSSGL) shows a compositional bias: polar residues. Ser783 carries the phosphoserine modification. Thr800 bears the Phosphothreonine mark. Residues 807–823 (RSKLQLERTVSTSSQPE) are compositionally biased toward polar residues. The interval 807 to 851 (RSKLQLERTVSTSSQPEENVDRANDMLPKKSEESAAPSRERPKAK) is disordered. A phosphoserine mark is found at Ser817 and Ser820. The span at 825-849 (NVDRANDMLPKKSEESAAPSRERPK) shows a compositional bias: basic and acidic residues. A phosphoserine mark is found at Ser915 and Ser936. The tract at residues 964–1024 (HQVTSSGDKD…TSETQEGGKK (61 aa)) is disordered. Polar residues predominate over residues 1010–1019 (TAGQSTSETQ). The interval 1020–1182 (EGGKKAALGA…VQEISDVVQR (163 aa)) is F-actin-binding.

This sequence belongs to the protein kinase superfamily. Tyr protein kinase family. ABL subfamily. Interacts with PSMA7. Interacts with CTTN. Found in a complex with ABL1, ABL2, CRK and UNC119; leading to the inhibition of CRK phosphorylation by ABL kinases. The cofactor is Mg(2+). Requires Mn(2+) as cofactor. Phosphorylated at Tyr-261 by ABL1 in response to oxidative stress. Phosphorylated by PDGFRB. Post-translationally, polyubiquitinated. Polyubiquitination of ABL2 leads to degradation. In terms of tissue distribution, widely expressed.

It is found in the cytoplasm. Its subcellular location is the cytoskeleton. The enzyme catalyses L-tyrosyl-[protein] + ATP = O-phospho-L-tyrosyl-[protein] + ADP + H(+). Its activity is regulated as follows. Stabilized in the inactive form by an association between the SH3 domain and the SH2-TK linker region, interactions of the N-terminal cap, and contributions from an N-terminal myristoyl group and phospholipids. Activated by autophosphorylation as well as by SRC-family kinase-mediated phosphorylation. Activated by RIN1 binding to the SH2 and SH3 domains. Inhibited by imatinib mesylate (Gleevec) which is used for the treatment of chronic myeloid leukemia (CML). Phosphatidylinositol 4,5-bisphosphate (PIP2), a highly abundant phosphoinositide known to regulate cytoskeletal and membrane proteins, inhibits the tyrosine kinase activity. In terms of biological role, non-receptor tyrosine-protein kinase that plays an ABL1-overlapping role in key processes linked to cell growth and survival such as cytoskeleton remodeling in response to extracellular stimuli, cell motility and adhesion and receptor endocytosis. Coordinates actin remodeling through tyrosine phosphorylation of proteins controlling cytoskeleton dynamics like MYH10 (involved in movement); CTTN (involved in signaling); or TUBA1 and TUBB (microtubule subunits). Binds directly F-actin and regulates actin cytoskeletal structure through its F-actin-bundling activity. Involved in the regulation of cell adhesion and motility through phosphorylation of key regulators of these processes such as CRK, CRKL, DOK1 or ARHGAP35. Adhesion-dependent phosphorylation of ARHGAP35 promotes its association with RASA1, resulting in recruitment of ARHGAP35 to the cell periphery where it inhibits RHO. Phosphorylates multiple receptor tyrosine kinases like PDGFRB and other substrates which are involved in endocytosis regulation such as RIN1. In brain, may regulate neurotransmission by phosphorylating proteins at the synapse. ABL2 also acts as a regulator of multiple pathological signaling cascades during infection. Pathogens can highjack ABL2 kinase signaling to reorganize the host actin cytoskeleton for multiple purposes, like facilitating intracellular movement and host cell exit. Finally, functions as its own regulator through autocatalytic activity as well as through phosphorylation of its inhibitor, ABI1. Positively regulates chemokine-mediated T-cell migration, polarization, and homing to lymph nodes and immune-challenged tissues, potentially via activation of NEDD9/HEF1 and RAP1. The sequence is that of Tyrosine-protein kinase ABL2 (ABL2) from Homo sapiens (Human).